Here is a 441-residue protein sequence, read N- to C-terminus: Deoxyguanosinetriphosphate triphosphohydrolase-like protein (441 aa).

In terms of domain architecture, HD spans 59 to 250 (RLTHSLEVSQ…MELADDTAYA (192 aa)).

This sequence belongs to the dGTPase family. Type 2 subfamily.

This chain is Deoxyguanosinetriphosphate triphosphohydrolase-like protein, found in Shewanella loihica (strain ATCC BAA-1088 / PV-4).